A 977-amino-acid polypeptide reads, in one-letter code: Kinesin-like protein KIN-7L, chloroplastic (977 aa).

The segment covering 1 to 12 has biased composition (polar residues); sequence MGSKQVSKTRNG. The segment at 1 to 66 is disordered; it reads MGSKQVSKTR…PPKPLQSKEN (66 aa). 2 stretches are compositionally biased toward low complexity: residues 22–31 and 38–54; these read SSASSTTSSS and SVDSHSSPTSSSVRSKP. Residues 66-385 enclose the Kinesin motor domain; the sequence is NVTVTVRFRP…LKFAHRAKHI (320 aa). ATP is bound at residue 146-153; sequence GVTSSGKT. Residues 386 to 471 are a coiled coil; the sequence is EIQAAQNKII…LTKLILVSNK (86 aa). Residues 549–589 form a disordered region; it reads DSSLGGSSLSDKSSAVKSNSTPSTPQGEGSDFHTESRLSEG. Over residues 551–561 the composition is skewed to low complexity; the sequence is SLGGSSLSDKS. Residues 563–575 are compositionally biased toward polar residues; that stretch reads AVKSNSTPSTPQG. 2 coiled-coil regions span residues 626-688 and 732-942; these read MEIL…GKQI and IQEQ…LENE. Residues 864-876 are compositionally biased toward polar residues; it reads SSVTTPQGKTGNL. 2 disordered regions span residues 864 to 891 and 958 to 977; these read SSVTTPQGKTGNLRNGRRESVSKRKEQE and AANSGLSDSVSETRIEHFGT. A compositionally biased stretch (basic and acidic residues) spans 879 to 891; it reads GRRESVSKRKEQE. Residues 958-967 show a composition bias toward polar residues; it reads AANSGLSDSV. Positions 968-977 are enriched in basic and acidic residues; sequence SETRIEHFGT.

Belongs to the TRAFAC class myosin-kinesin ATPase superfamily. Kinesin family. KIN-7 subfamily.

Its subcellular location is the plastid. The protein localises to the chloroplast. The chain is Kinesin-like protein KIN-7L, chloroplastic from Arabidopsis thaliana (Mouse-ear cress).